Here is a 398-residue protein sequence, read N- to C-terminus: uncharacterized protein (398 aa).

A helical membrane pass occupies residues 88-108 (IGFTIGFAIFFILLFLLSNMV).

To B.megaterium SpoIV.

The protein localises to the cell membrane. This is an uncharacterized protein from Bacillus subtilis (strain 168).